The primary structure comprises 647 residues: UvrABC system protein C (647 aa).

The GIY-YIG domain occupies 16-95 (VEPGVYRFRD…IKEFDPRFNV (80 aa)). In terms of domain architecture, UVR spans 208–243 (DRYARELEQQMNAAAENLDFERAARLRDDRSALKRA).

Belongs to the UvrC family. As to quaternary structure, interacts with UvrB in an incision complex.

Its subcellular location is the cytoplasm. The UvrABC repair system catalyzes the recognition and processing of DNA lesions. UvrC both incises the 5' and 3' sides of the lesion. The N-terminal half is responsible for the 3' incision and the C-terminal half is responsible for the 5' incision. This chain is UvrABC system protein C, found in Mycobacterium marinum (strain ATCC BAA-535 / M).